The following is a 990-amino-acid chain: Mediator of RNA polymerase II transcription subunit 5 (990 aa).

The protein belongs to the Mediator complex subunit 5 family. As to quaternary structure, component of the Mediator complex.

The protein localises to the nucleus. Functionally, component of the Mediator complex, a coactivator involved in the regulated transcription of nearly all RNA polymerase II-dependent genes. Mediator functions as a bridge to convey information from gene-specific regulatory proteins to the basal RNA polymerase II transcription machinery. Mediator is recruited to promoters by direct interactions with regulatory proteins and serves as a scaffold for the assembly of a functional preinitiation complex with RNA polymerase II and the general transcription factors. The sequence is that of Mediator of RNA polymerase II transcription subunit 5 (NUT1) from Debaryomyces hansenii (strain ATCC 36239 / CBS 767 / BCRC 21394 / JCM 1990 / NBRC 0083 / IGC 2968) (Yeast).